The following is a 529-amino-acid chain: GMP synthase [glutamine-hydrolyzing] (529 aa).

Residues 17–206 (TILVLDFGSQ…AIDICQASNN (190 aa)) enclose the Glutamine amidotransferase type-1 domain. The active-site Nucleophile is the Cys-93. Catalysis depends on residues His-180 and Glu-182. Residues 207-404 (WTMENFIDTE…MGVPHDLVWR (198 aa)) form the GMPS ATP-PPase domain. 235-241 (SGGVDST) provides a ligand contact to ATP. Residues Arg-308, Asp-466, Lys-521, and Glu-527 each coordinate XMP.

In terms of assembly, homodimer. It depends on Mg(2+) as a cofactor.

It is found in the cytoplasm. The protein resides in the cytosol. The enzyme catalyses XMP + L-glutamine + ATP + H2O = GMP + L-glutamate + AMP + diphosphate + 2 H(+). Its pathway is purine metabolism; GMP biosynthesis; GMP from XMP (L-Gln route): step 1/1. Catalyzes the conversion of xanthine monophosphate (XMP) to GMP in the presence of glutamine and ATP through an adenyl-XMP intermediate. This Debaryomyces hansenii (strain ATCC 36239 / CBS 767 / BCRC 21394 / JCM 1990 / NBRC 0083 / IGC 2968) (Yeast) protein is GMP synthase [glutamine-hydrolyzing] (GUA1).